The chain runs to 347 residues: 4-hydroxy-2-oxovalerate aldolase 2 (347 aa).

Positions 9–259 (ITIVDTTLRD…DTGVDLFPLI (251 aa)) constitute a Pyruvate carboxyltransferase domain. Substrate-binding positions include 17-18 (RD), serine 171, and histidine 198. Aspartate 18 provides a ligand contact to Mn(2+). Mn(2+) is bound by residues histidine 198 and histidine 200. Position 289 (tyrosine 289) interacts with substrate.

The protein belongs to the 4-hydroxy-2-oxovalerate aldolase family.

It carries out the reaction (S)-4-hydroxy-2-oxopentanoate = acetaldehyde + pyruvate. The chain is 4-hydroxy-2-oxovalerate aldolase 2 from Rhodococcus opacus (strain B4).